The sequence spans 204 residues: Probable chorismate pyruvate-lyase (204 aa).

Arginine 78, leucine 131, and glutamate 190 together coordinate substrate.

The protein belongs to the UbiC family.

It is found in the cytoplasm. It carries out the reaction chorismate = 4-hydroxybenzoate + pyruvate. The protein operates within cofactor biosynthesis; ubiquinone biosynthesis. Removes the pyruvyl group from chorismate, with concomitant aromatization of the ring, to provide 4-hydroxybenzoate (4HB) for the ubiquinone pathway. The protein is Probable chorismate pyruvate-lyase of Shewanella frigidimarina (strain NCIMB 400).